Reading from the N-terminus, the 570-residue chain is Berberine bridge enzyme-like 19 (570 aa).

The signal sequence occupies residues 1-30 (MLTTPPRTFVSVPFFFFFLLFLSLPLSSFS). Residues Cys42 and Cys105 are joined by a disulfide bond. Residue Asn80 is glycosylated (N-linked (GlcNAc...) asparagine). The FAD-binding PCMH-type domain occupies 83–257 (STLKPTIIIT…LGYKVKLVPV (175 aa)). Positions 120 to 182 (HDYDGLSYIS…RVHGFPAGVC (63 aa)) form a cross-link, 6-(S-cysteinyl)-8alpha-(pros-histidyl)-FAD (His-Cys). N-linked (GlcNAc...) asparagine glycans are attached at residues Asn341 and Asn359.

The protein belongs to the oxygen-dependent FAD-linked oxidoreductase family. It depends on FAD as a cofactor. Post-translationally, the FAD cofactor is bound via a bicovalent 6-S-cysteinyl, 8alpha-N1-histidyl FAD linkage.

Its subcellular location is the secreted. The protein localises to the cell wall. This is Berberine bridge enzyme-like 19 from Arabidopsis thaliana (Mouse-ear cress).